The primary structure comprises 158 residues: Transcription factor BTF3 homolog 4 (158 aa).

The region spanning 33–98 (TADDKKLQSS…AEVKQITEML (66 aa)) is the NAC-A/B domain. Positions 123–158 (QVLDSKASKPEDIEEEDDDVPELVGNFDEASKNEAN) are disordered. Residues 134–143 (DIEEEDDDVP) are compositionally biased toward acidic residues.

Belongs to the NAC-beta family.

In Xenopus laevis (African clawed frog), this protein is Transcription factor BTF3 homolog 4 (btf3l4).